Reading from the N-terminus, the 856-residue chain is MPSRSPACRPRGRNRRSAADAVARPLALALILVSTLPRAAHSQDLALPPVQPRGVRRTMTCDNIPEPFGTRSRGASRLPGFEVTCGPNREAMLSIGGDAYMIDFVSVSGSYVVVFAEPITQVCYDGKGKPTPDTGTGAKSSEGTTTTFTWSLEGTPFTFSKSNKLVNFGCNRTLMANFFIVPGDSSPLYTSCTTTCNTLQISGSCLGEACCEAPMDQVNGAKAFSLSFERTTANGTGEEDGTCSAAFFLDKDETVFTFSGDEVRPLKTALLPPGERRMVLDWAIGSTSCEQTQSYTFEKLCKYGTCVDAPTGAGYLCKCPSGYDGNPYVSDGCQDINECRNYNSNNCTYQNLCNNTLGGYTCSCPENNIGDGYRTGTGCNTTLATPVSPSQQPQGINVCDHPEKNPCTYIKYCIDLEGVVSCACPEGMSGDGRKNGRGCCFSCQKHFPLDTVLGVSLVLMVTTTTAASCYCWAVKKRELGRKRAELFRKNGGLLLQQRFSTITSQGEDQYSSKIFSAEELKAATDNYSESRILGRGGQGTVYKGILPDQTVVAIKKSKVFDESQVEQFVNEIAILSQIDHPNVVKLLGCCLETQVPLLVYEFISNGTLFQHIHNRNATRPLTWEDCLRIAAETADALAYLHSASSIPIIHRDIKSSNILLDGNFVAKIADFGASRSVPFDQTHITTLIQGTIGYLDPEYFQSSQLTEKSDVYSFGVVLAELLTRQKPISAARPEDSCNLAMHLVVLFNKGRLLQEIEPHILAEAGEDQCYAVAELSVRCLNVKGEERPAMVVVASVLQELRRSFTIDQAVGIKDESIQENSEQEEKHLHESRSIPSLQSSEVSTQCSMEAKMSSFC.

The first 42 residues, 1-42 (MPSRSPACRPRGRNRRSAADAVARPLALALILVSTLPRAAHS), serve as a signal peptide directing secretion. N-linked (GlcNAc...) asparagine glycans are attached at residues Asn171 and Asn234. The region spanning 297–334 (FEKLCKYGTCVDAPTGAGYLCKCPSGYDGNPYVSDGCQ) is the EGF-like 1 domain. Intrachain disulfides connect Cys301–Cys306, Cys319–Cys333, Cys339–Cys353, Cys347–Cys362, and Cys364–Cys379. One can recognise an EGF-like 2; calcium-binding domain in the interval 335–380 (DINECRNYNSNNCTYQNLCNNTLGGYTCSCPENNIGDGYRTGTGCN). N-linked (GlcNAc...) asparagine glycosylation is found at Asn346 and Asn354. Asn380 carries N-linked (GlcNAc...) asparagine glycosylation. The chain crosses the membrane as a helical span at residues 452–470 (VLGVSLVLMVTTTTAASCY). A Protein kinase domain is found at 527-805 (YSESRILGRG…VLQELRRSFT (279 aa)). Residues 533–541 (LGRGGQGTV) and Lys555 contribute to the ATP site. Asp652 serves as the catalytic Proton acceptor. Positions 816 to 844 (SIQENSEQEEKHLHESRSIPSLQSSEVST) are disordered. Residues 823 to 832 (QEEKHLHESR) show a composition bias toward basic and acidic residues. Over residues 833-844 (SIPSLQSSEVST) the composition is skewed to polar residues.

This sequence belongs to the protein kinase superfamily. Ser/Thr protein kinase family. Interacts with WAK17 isoform 2; the interaction is direct. Interacts with LRR5; the interaction is direct. As to quaternary structure, interacts with WAK17 isoform 1; the interaction is direct. In terms of assembly, (Microbial infection) Interacts with G.zeae CFEM1 (via CFEM domain); the interaction is direct. Interacts with G.zeae CFEMN1; the interaction is direct. Interacts with G.zeae CFEM5; the interaction is direct. It depends on Mn(2+) as a cofactor. The cofactor is Mg(2+).

It is found in the cell membrane. The catalysed reaction is L-seryl-[protein] + ATP = O-phospho-L-seryl-[protein] + ADP + H(+). It catalyses the reaction L-threonyl-[protein] + ATP = O-phospho-L-threonyl-[protein] + ADP + H(+). Kinase that contributes to activation of the hypersensitive response, a form of programmed cell death, upon fungal infection. Its function is as follows. Secreted protein that contributes to activation of the hypersensitive response, a form of programmed cell death, upon fungal infection. May sense the presence of fungal material and relay the signal to WAK17 isoform 1. This Zea mays (Maize) protein is Wall-associated receptor kinase 17.